We begin with the raw amino-acid sequence, 459 residues long: MLKIYNTLKREKEEFKPINPNQVGMYVCGVTVYDLCHFGHGRTFVSFDVIARYLRYLGYNLRYVRNITDVDDKIIKRALENNETCDQLVDRMIAEMHKDFDDLNILRPDVEPRATKHIPEIVAMVEKLIANGHAYVAADGDVMFDVESFKKYGALSRQNLEQLQAGARVEIKSVKKNPMDFVLWKMSKEGEPSWQSPWGNGRPGWHIECSAMNSKELGEHFDIHGGGSDLMFPHHENEIAQSCCAHGGDYVNYWLHTGMLTIDDEKMSKSLGNFFTIRTMLEKYESETLRYFFLTAHYRSLLNYSLNNLDLARSALERLYTSLRGCDLSVEVAGGEQYVEAFKAAMDDDFNTPGALAVLFEIAREVNKLKTEDMAKANGLAVRLKELAGVLGLLYQDPEAFLQGDADNDEVAEIEALIKQRNEAKAAKNWAVADEVRDKLKAMNIVLEDTPNGTTWRKA.

Residue cysteine 28 coordinates Zn(2+). Positions 30–40 (VTVYDLCHFGH) match the 'HIGH' region motif. Residues cysteine 209, histidine 234, and glutamate 238 each coordinate Zn(2+). Positions 266–270 (KMSKS) match the 'KMSKS' region motif. Lysine 269 provides a ligand contact to ATP.

This sequence belongs to the class-I aminoacyl-tRNA synthetase family. Monomer. The cofactor is Zn(2+).

It is found in the cytoplasm. It carries out the reaction tRNA(Cys) + L-cysteine + ATP = L-cysteinyl-tRNA(Cys) + AMP + diphosphate. The chain is Cysteine--tRNA ligase from Actinobacillus pleuropneumoniae serotype 3 (strain JL03).